A 206-amino-acid polypeptide reads, in one-letter code: Guanylate kinase (206 aa).

Residues 5 to 184 enclose the Guanylate kinase-like domain; it reads GMLIVLSGPS…AAERIKAIIR (180 aa). 12-19 is a binding site for ATP; sequence GPSGVGKG.

It belongs to the guanylate kinase family.

It is found in the cytoplasm. It carries out the reaction GMP + ATP = GDP + ADP. Functionally, essential for recycling GMP and indirectly, cGMP. The chain is Guanylate kinase from Lactiplantibacillus plantarum (strain ATCC BAA-793 / NCIMB 8826 / WCFS1) (Lactobacillus plantarum).